We begin with the raw amino-acid sequence, 165 residues long: Probable DNA polymerase III subunit chi (165 aa).

Belongs to the DNA polymerase III chi/HolC chain family. In terms of assembly, DNA polymerase III contains a core (composed of alpha, epsilon and theta chains) that associates with a tau subunit. This core dimerizes to form the POLIII' complex. PolIII' associates with the gamma complex (composed of gamma, delta, delta', psi and chi chains) and with the beta chain to form the complete DNA polymerase III complex. Interacts directly with the psi subunit (holD). The only subunit of the DNA polymerase III holoenzyme known to interact with single-stranded DNA binding protein (SSB).

The catalysed reaction is DNA(n) + a 2'-deoxyribonucleoside 5'-triphosphate = DNA(n+1) + diphosphate. Functionally, part of the beta sliding clamp loading complex, which hydrolyzes ATP to load the beta clamp onto primed DNA to form the DNA replication pre-initiation complex. DNA polymerase III is a complex, multichain enzyme responsible for most of the replicative synthesis in bacteria. This DNA polymerase also exhibits 3' to 5' exonuclease activity. The protein is Probable DNA polymerase III subunit chi of Rickettsia prowazekii (strain Madrid E).